Here is a 438-residue protein sequence, read N- to C-terminus: GTPase Der (438 aa).

EngA-type G domains are found at residues 4-169 and 178-353; these read PVVA…PEKG and IDVA…DQNS. GTP contacts are provided by residues 10–17, 57–61, 120–123, 184–191, 231–235, and 296–299; these read GRPNVGKS, DTGGI, NKVD, GKPNVGKS, DTAGL, and NKWD. Residues 354–438 enclose the KH-like domain; it reads RRVKTGLLNE…PIRLKFKQKT (85 aa).

Belongs to the TRAFAC class TrmE-Era-EngA-EngB-Septin-like GTPase superfamily. EngA (Der) GTPase family. In terms of assembly, associates with the 50S ribosomal subunit.

Its function is as follows. GTPase that plays an essential role in the late steps of ribosome biogenesis. The chain is GTPase Der from Halothermothrix orenii (strain H 168 / OCM 544 / DSM 9562).